The following is a 1086-amino-acid chain: Endo-1,4-beta-xylanase C (1086 aa).

Residues 1-31 (MRGKWLRLCLAAVLIVSLLPGLGAGEWKASA) form the signal peptide. 2 CBM-cenC domains span residues 35 to 183 (GDIL…IRLV) and 197 to 359 (GQAL…ITAT). Positions 365-710 (EKNIPDLAKK…KPAYWALVDP (346 aa)) constitute a GH10 domain. The active-site Proton donor is the glutamate 502. Residue aspartate 556 is part of the active site. Glutamate 620 serves as the catalytic Nucleophile.

It belongs to the glycosyl hydrolase 10 (cellulase F) family.

It catalyses the reaction Endohydrolysis of (1-&gt;4)-beta-D-xylosidic linkages in xylans.. It participates in glycan degradation; xylan degradation. Its function is as follows. Endoxylanase with high hydrolytic activity on birchwood and oat spelt xylan. Xylotetraose, xylotriose, xylobiose and xylose are the main products from birchwood xylan hydrolysis. Shows increasing activity on xylo-oligosaccharides of increasing length. Displays very low hydrolytic activity on Avicel, carboxymethylcellulose (CMC) and p-nitrophenyl-beta-xylopyranoside. Also shows transxylosidase activity, allowing the formation of xylo-oligosaccharides of higher degree of polymerization than the starting substrate. The protein is Endo-1,4-beta-xylanase C (xynC) of Paenibacillus barcinonensis.